The chain runs to 1391 residues: ESX-5 secretion system protein EccC5 (1391 aa).

The next 2 membrane-spanning stretches (helical) occupy residues 38-58 and 65-85; these read WLIV…AMVF and FGGI…MMMF. FtsK domains lie at 476–678, 858–1052, and 1161–1354; these read GELL…GAAQ, QPPW…EDAK, and LAPV…DPDE. Residues 499–506, 876–883, and 1178–1185 contribute to the ATP site; these read GTTGSGKS, GAGGSGKT, and GRRECGRT.

Part of the ESX-5 / type VII secretion system (T7SS), which is composed of cytosolic and membrane components. The ESX-5 membrane complex is composed of EccB5, EccC5, EccD5 and EccE5.

It is found in the cell inner membrane. Functionally, part of the ESX-5 specialized secretion system, which is responsible for the secretion of EsxN and a number of PE_PGRS and PPE proteins, including PPE41. This Mycobacterium tuberculosis (strain CDC 1551 / Oshkosh) protein is ESX-5 secretion system protein EccC5.